The sequence spans 266 residues: UPF0294 protein YafD (266 aa).

This sequence belongs to the UPF0294 family.

It localises to the cytoplasm. The polypeptide is UPF0294 protein YafD (yafD) (Escherichia coli O157:H7).